A 130-amino-acid polypeptide reads, in one-letter code: Small ribosomal subunit protein uS11 (130 aa).

It belongs to the universal ribosomal protein uS11 family. Part of the 30S ribosomal subunit. Interacts with proteins S7 and S18. Binds to IF-3.

Its function is as follows. Located on the platform of the 30S subunit, it bridges several disparate RNA helices of the 16S rRNA. Forms part of the Shine-Dalgarno cleft in the 70S ribosome. The protein is Small ribosomal subunit protein uS11 of Acidiphilium cryptum (strain JF-5).